A 74-amino-acid chain; its full sequence is ATP synthase subunit 9, mitochondrial (74 aa).

Helical transmembrane passes span 16-36 (GLIG…IGVS) and 50-70 (ILGF…AFLL).

It belongs to the ATPase C chain family. F-type ATPases have 2 components, CF(1) - the catalytic core - and CF(0) - the membrane proton channel. CF(1) has five subunits: alpha(3), beta(3), gamma(1), delta(1), epsilon(1). CF(0) has three main subunits: a, b and c.

The protein resides in the mitochondrion inner membrane. Mitochondrial membrane ATP synthase (F(1)F(0) ATP synthase or Complex V) produces ATP from ADP in the presence of a proton gradient across the membrane which is generated by electron transport complexes of the respiratory chain. F-type ATPases consist of two structural domains, F(1) - containing the extramembraneous catalytic core and F(0) - containing the membrane proton channel, linked together by a central stalk and a peripheral stalk. During catalysis, ATP synthesis in the catalytic domain of F(1) is coupled via a rotary mechanism of the central stalk subunits to proton translocation. Part of the complex F(0) domain. A homomeric c-ring of probably 10 subunits is part of the complex rotary element. In Neurospora crassa (strain ATCC 24698 / 74-OR23-1A / CBS 708.71 / DSM 1257 / FGSC 987), this protein is ATP synthase subunit 9, mitochondrial (atp-9).